Here is a 695-residue protein sequence, read N- to C-terminus: uncharacterized protein (695 aa).

Ser-113 bears the Phosphoserine mark. 12 helical membrane-spanning segments follow: residues 237 to 257, 265 to 285, 313 to 333, 344 to 364, 380 to 400, 408 to 428, 457 to 477, 488 to 508, 531 to 551, 565 to 585, 604 to 624, and 633 to 653; these read FPLIFTFLLEQIFPMVCSLTV, LAAVSLASMTSNITLAIFEGI, IAFSLVIYIPFAVMWWYSEPL, INLTSRFLRVLILGAPAYIFF, GIYVLTICAPLNVLVSYTLVW, FIGAAIAVVLNFWLMFFLLLF, AFSGIIMLEAEELSYELLTLF, AQSAVSTMAALLYMIPFAIGI, QVGLSFSFIAGFINCCILVFG, VIKLIAQVLPLVGIVQNFDSL, IVNLMAYYLFGIPLALILSWF, and WIGIGSAMLLIGLVEAYYVLF. Residues 673-688 are compositionally biased toward acidic residues; it reads EVDSDEYLTDSDDPDE. The segment at 673–695 is disordered; that stretch reads EVDSDEYLTDSDDPDENTALLGA.

Belongs to the multi antimicrobial extrusion (MATE) (TC 2.A.66.1) family.

The protein resides in the membrane. This is an uncharacterized protein from Saccharomyces cerevisiae (strain ATCC 204508 / S288c) (Baker's yeast).